The primary structure comprises 343 residues: N(4)-bis(aminopropyl)spermidine synthase (343 aa).

Belongs to the branched-chain polyamine synthase family.

The protein resides in the cytoplasm. The enzyme catalyses 2 S-adenosyl 3-(methylsulfanyl)propylamine + spermidine = N(4)-bis(aminopropyl)spermidine + 2 S-methyl-5'-thioadenosine + 2 H(+). Its pathway is amine and polyamine biosynthesis. In terms of biological role, involved in the biosynthesis of branched-chain polyamines, which support the growth of thermophiles under high-temperature conditions. Catalyzes the sequential condensation of spermidine with the aminopropyl groups of decarboxylated S-adenosylmethionines to produce N(4)-bis(aminopropyl)spermidine via N(4)-aminopropylspermidine. This chain is N(4)-bis(aminopropyl)spermidine synthase, found in Thermus thermophilus.